The following is a 235-amino-acid chain: Glycerol-3-phosphate acyltransferase (235 aa).

Transmembrane regions (helical) follow at residues 4 to 24 (LLAI…IMAG), 56 to 76 (TVTL…VAFF), 94 to 114 (LLAG…GFKG), 126 to 146 (IGIA…TVWF), 152 to 172 (VASI…KYVF), and 194 to 214 (SLDY…LFTH).

Belongs to the PlsY family. As to quaternary structure, probably interacts with PlsX.

Its subcellular location is the cell inner membrane. The enzyme catalyses an acyl phosphate + sn-glycerol 3-phosphate = a 1-acyl-sn-glycero-3-phosphate + phosphate. It participates in lipid metabolism; phospholipid metabolism. Its function is as follows. Catalyzes the transfer of an acyl group from acyl-phosphate (acyl-PO(4)) to glycerol-3-phosphate (G3P) to form lysophosphatidic acid (LPA). This enzyme utilizes acyl-phosphate as fatty acyl donor, but not acyl-CoA or acyl-ACP. The sequence is that of Glycerol-3-phosphate acyltransferase from Chlorobium phaeovibrioides (strain DSM 265 / 1930) (Prosthecochloris vibrioformis (strain DSM 265)).